We begin with the raw amino-acid sequence, 2527 residues long: MIAPVNAGDTDASEPGDLGVMPIAIIGMACRFPGDASNPEKLWNLCAKGKSAWSPIPESRFHAESWYHPDKGHLGTSYVKGAHFLTEDISRFDAAFFNCTAESASTMDPEVRMQLETVYEALESAGLPLDQVAGSRTGVYAGTCFRDNHDSLMRDPDTLARFFLTGNGAAMIANRISHFFDLRGPSLMVDTGCSTTLTLLHLACQSVRAGESEMAIVGGSNVLLNPDMFIAGSNLSLLSEAGRCFAFDSRAAGYGRGDGIASIVIKPLAAALRDGDPVRAVIRNSAANQDGKTATLTSPSQDAQEELMRECYDMAGLDPRDTSYVEAHGTGTQVGDTIEAHAIGHVFGAGRSSESPLVIGSVKTNIGHTEAASGLAGVIKVVMAMEKRAIPPHMNFESPNEKISLEGLKLKIPLSLQEWPSPLLQRASINNFGYGGANAHVIVESPQSMLLPLTPSSSEMGNTPNPKKRSRVFLLSAKDPAAARSMGENLYDYVATTLENSRENEEQILDQLAFTLGQRRTRFAWTTAWSGSSLADVHARLGSARSTAERSTRAPRVGMVFTGQGAQWFAMGRELFSAYPVFYDTMHEIDACLKNMGATWSAVEELQRDAKESRINQVTFSLPLSVAIQLALVDLLRSWGIRPAGVTGHSSGEVGAAYAAGAITLAGAMAIVYTRGDLTSQFQKLLDRRGGMVAVGLGREEAEKALAEVQSGTAVIACVNSPSSVTISGDECAVEEVEAMLTARGVFARRLRVEAAYHSHHMLPLAEAYRVLLSRFLEPNTEFDSTVVYSSPTTGDRMTSAADIAHPDHWVRNMVQPVEFLNSLRNLCSGAAPARTSTSTAVDMLVEVGPHGALAGPIRQTLALPELKDAGITYASCLSRGQDAVQTIHQLICTLLQAGYPVDLEAVNFPYGRSDVQVLTNLPPYPWNHETSYWAEPRRNKELRARTVAPHDLLGVPAAGSTPTTPAWRHVVRPRDIPWVRDHIVQGAIVYPGAGYVSMVVEALRQLQTPDNPSHGYQLQDVQIRNPLILEDTAEGVDVQLSLHPCGDRVRHAQGWYEFLIQSVNQTGDLWTLHCEGLCCTPSPAQGTGWAGPPAPVNAPSFTVPASAWRILNPADTYKTLHEVGVCHGPIFQNLMSAQSAPGHSQSVFQVADSAATMPQGYQQSHVIHPITLDAVFQAVYHNLPAGGTQQRTAMIPTSIQNLYISAKLITSPGHQFRADSTLMKISGQGFESSVRVINNAGTDEANEPPTPVLTLDGLFCQSLGSSAVVLTPDDKLCYTSVWAPDFDFLQPEHLLRKAEGAHQHSFSELQAAAVVFINDALQEFENEQVVAAEHQSYWDWMKGVVDQARPTLDLAGVTAQYMAALTEDLKQGVDGRLLCRFGERLPEILSGLVPAKEILRDFLVEDQAEWSSVSEYLEPFMSSLMKLHGHKRPRATVLEIGTGNVASTRMFAKALTRNDTQLFARYDVTAPSTGLVEVASKALRDDTRAECKVLDLDTPAGDQGFTRASYDLLILSASALLAAEDVVQSLTSLRALLAPGGKCILWGPTLGDSALQTIVRLLPRWSGVINATPTWQRLLAKAGFEPSNFQLEEGLNSSGYQGEVVIATAKADTTIYSAVKVVLVSGTSPPEEWQQTLQHSLPADVVSGISVVSSLEDVDVEDKVCLILEEFVQPILENPSEEQFYDLQRVLGSSRATVWVSRGAQGDAEDPRGSLHQGLLRTLRCENILRQYVSVDLDPNAPVWSSSSATQIAWILSNMLITSSFHLPETEYAIRNSVVQISRVYGDEQEAQLVGTTKPQNPELRPWSTPGQNIRLGVATPGLLNSLVFTEDPTIEETLPDDWVEIEPRAFGLNFRDIMVALGQLDETRMGFECSGVITRVGQSAQAAGFCPGQGVYAFIIGYFATKVRIPFTSVASIPAGMDFATAASIPLVFITAYHALVDLARLQRDETVLIHSGTGGVGQAAIMLAQSIGADIFVTVGSEDKREFLMRQYGIPSSRIFSSRNPSFAQHIMSETDGKGVDVVLNSLAGPLLRETWRCVGMFGRFIEIGKRDIEQNSMVEMGPFVRSTLFASLDLITLGEQRGKEVQRIFAAINELLADGEIRPVGPITRFGIGEVEKAFRTMQTGKHMGKIVLEPRPGDQVRVLTAGPRPAELSPDDTYLLVGGVGGIGKSLCQLLVDRGARNLLVLSRNAARITPETQQWLDVLQATGARVVLESCDVTQRAQLQAVFEKYSSELPPIRGVIQAAMVLKDGIFESMTHEDYLAALKPKVQGTFNLHTLLPTDLRFFILLSSISGFGGNAGQANYAAGGSYQDALARHRAGRGLPAVSIDLGMVSSVGVVAGTQHVADHLEKLGLRAVSEQEVWALVESAIRHPIRTPETCHIVTGLPGGFVRSDSPVCWNRDARFAILEQKDFSSSGLASTSNPGAGLKERLSAVTTPAEVTTLIQSALITKLAEMFSRSPEEIDPSLPLAHFGVDSLVAVELRNWSVATVQADCSIFDVMHAVSVTGLAGQMAKKSRFVKL.

Residues 20–445 enclose the Ketosynthase family 3 (KS3) domain; the sequence is VMPIAIIGMA…GANAHVIVES (426 aa). Active-site for beta-ketoacyl synthase activity residues include cysteine 193, histidine 328, and histidine 368. Residues 560–882 are malonyl-CoA:ACP transacylase (MAT) domain; that stretch reads VFTGQGAQWF…TYASCLSRGQ (323 aa). The N-terminal hotdog fold stretch occupies residues 951–1086; sequence HDLLGVPAAG…GLCCTPSPAQ (136 aa). The interval 951 to 1243 is dehydratase (DH) domain; the sequence is HDLLGVPAAG…SVRVINNAGT (293 aa). Positions 951–1270 constitute a PKS/mFAS DH domain; it reads HDLLGVPAAG…CQSLGSSAVV (320 aa). Histidine 983 serves as the catalytic Proton acceptor; for dehydratase activity. The interval 1108 to 1270 is C-terminal hotdog fold; the sequence is AWRILNPADT…CQSLGSSAVV (163 aa). The Proton donor; for dehydratase activity role is filled by aspartate 1174. Residues 1406-1587 form a methyltransferase (CMet) domain region; that stretch reads EDQAEWSSVS…RLLAKAGFEP (182 aa). The segment at 1823 to 2137 is enoyl reductase (ER) (ER) domain; the sequence is GLLNSLVFTE…TGKHMGKIVL (315 aa). The interval 2162–2339 is ketoreductase (KR) domain; sequence TYLLVGGVGG…AVSIDLGMVS (178 aa). A Carrier domain is found at 2445-2522; the sequence is EVTTLIQSAL…GLAGQMAKKS (78 aa). Serine 2482 bears the O-(pantetheine 4'-phosphoryl)serine mark.

The protein operates within secondary metabolite biosynthesis. Functionally, highly reducing polyketide synthase; part of the gene cluster that mediates the biosynthesis of oxaleimides, cytotoxic compounds containing an unusual disubstituted succinimide moiety. The first step of the pathway is provided by the HR-PKS poxF that serves in a new mode of collaborative biosynthesis with the PKS-NRPS poxE, by providing the olefin containing amino acid substrate via the synthesis of an ACP-bound dec-4-enoate. The cytochrome P450 monooxygenase poxM-catalyzed oxidation at the alpha-position creates the enzyme-bound 2-hydroxydec-4-enoyl-ACP thioester, which may be prone to spontaneous hydrolysis to yield 2-hydroxydec-4-enoic acid due to increased electrophilicity of the carbonyl. 2-hydroxydec-4-enoic acid can then be further oxidized by poxM to yield the alpha-ketoacid 2-oxodec-4-enoicacid, which is reductively aminated by the aminotransferase poxL to yield (S,E)-2-aminodec-4-enoic acid. The Hybrid PKS-NRPS synthetase poxE then performs condensation between the octaketide product of its PKS modules and the amino group of (S,E)-2-aminodec-4-enoic acid which is activated and incorporated by the adenylation domain. The resulting aminoacyl product can be cyclized by the Diels-Alderase PoxQ and reductively released by the reductive (R) domain of poxE to yield an aldehyde intermediate. The released aldehyde is then substrate for a Knoevenagel condensation by the hydrolyase poxO followed by an oxidation at the 5-position of the pyrrolidone ring. The presence of the olefin from the amino acid building block allows for migration of the substituted allyl group to occur. This allylic transposition reaction takes place in a conjugate addition, semipinacol-like fashion to yield a succinimide intermediate. Iterative two-electron oxidations of the C7 methyl of the succinimide intermediate to the carboxylic acid can be catalyzed by one of two remaining cytochrome P450 monooxygenasess poxC or poxD to yield oxaleimide A. Subsequent oxidation yields the maleimide scaffold oxaleimide I. Both oxaleimide A and oxaleimide I can undergo oxidative modifications in the decalin ring to yield the series of products oxaleimides B to H. This is Highly reducing polyketide synthase poxF from Penicillium oxalicum.